The sequence spans 365 residues: Aminomethyltransferase (365 aa).

It belongs to the GcvT family. In terms of assembly, the glycine cleavage system is composed of four proteins: P, T, L and H.

It catalyses the reaction N(6)-[(R)-S(8)-aminomethyldihydrolipoyl]-L-lysyl-[protein] + (6S)-5,6,7,8-tetrahydrofolate = N(6)-[(R)-dihydrolipoyl]-L-lysyl-[protein] + (6R)-5,10-methylene-5,6,7,8-tetrahydrofolate + NH4(+). The glycine cleavage system catalyzes the degradation of glycine. This is Aminomethyltransferase from Parafrankia sp. (strain EAN1pec).